Consider the following 194-residue polypeptide: Lectin-C (194 aa).

The N-terminal stretch at Met1–Gly26 is a signal peptide. A propeptide spans Gln27 to Gly44 (removed in mature form). Chitin-binding type-1 domains are found at residues Ala45 to Tyr86, Asn87 to Tyr127, and Trp128 to Leu168. 12 disulfide bridges follow: Cys48–Cys63, Cys57–Cys69, Cys62–Cys76, Cys80–Cys84, Cys89–Cys104, Cys98–Cys110, Cys103–Cys117, Cys121–Cys125, Cys130–Cys145, Cys139–Cys151, Cys144–Cys158, and Cys162–Cys166. The propeptide at Leu171–Ser194 is removed in mature form.

As to quaternary structure, homodimer. The homodimers are asymmetric; formed in a 'head-to-tail' fashion via hydrophobic interactions between aromatic residues of the carbohydrate-binding sites of each subunit.

Functionally, N-acetyl-D-glucosamine binding lectin. Almost no hemagglutinating activity towards human erythrocytes. Low mitogenic activity towards human peripheral blood lymphocytes. The sequence is that of Lectin-C from Phytolacca americana (American pokeweed).